We begin with the raw amino-acid sequence, 566 residues long: Membrane protein insertase YidC (566 aa).

The chain crosses the membrane as a helical span at residues 6–26; that stretch reads NLLLLALLFVSFLLYTAWVEE. The disordered stretch occupies residues 30–80; sequence QVAPQVQTEQVDSSVPASVASSANSANLSDGVPNSPQQSSTDATSTELPAS. The span at 31–41 shows a compositional bias: polar residues; sequence VAPQVQTEQVD. A compositionally biased stretch (low complexity) spans 42–58; it reads SSVPASVASSANSANLS. Residues 61–80 are compositionally biased toward polar residues; sequence VPNSPQQSSTDATSTELPAS. The next 4 membrane-spanning stretches (helical) occupy residues 356–376, 433–453, 471–491, and 510–530; these read LLLF…LITF, LGGC…YWSL, LSVQ…MFFI, and FMPV…VLYW.

The protein belongs to the OXA1/ALB3/YidC family. Type 1 subfamily. Interacts with the Sec translocase complex via SecD. Specifically interacts with transmembrane segments of nascent integral membrane proteins during membrane integration.

The protein localises to the cell inner membrane. Required for the insertion and/or proper folding and/or complex formation of integral membrane proteins into the membrane. Involved in integration of membrane proteins that insert both dependently and independently of the Sec translocase complex, as well as at least some lipoproteins. Aids folding of multispanning membrane proteins. This chain is Membrane protein insertase YidC, found in Psychromonas ingrahamii (strain DSM 17664 / CCUG 51855 / 37).